We begin with the raw amino-acid sequence, 282 residues long: Ribonuclease 3 (282 aa).

In terms of domain architecture, RNase III spans 18–141; sequence FVAFFKSLNI…LVAAIYEDLG (124 aa). Glu59 is a binding site for Mg(2+). Asp63 is an active-site residue. Residues Asp127 and Glu130 each coordinate Mg(2+). Residue Glu130 is part of the active site.

It belongs to the ribonuclease III family. Homodimer. Mg(2+) serves as cofactor.

Its subcellular location is the cytoplasm. The catalysed reaction is Endonucleolytic cleavage to 5'-phosphomonoester.. Functionally, digests double-stranded RNA. Involved in the processing of primary rRNA transcript to yield the immediate precursors to the large and small rRNAs (23S and 16S). Processes some mRNAs, and tRNAs when they are encoded in the rRNA operon. Processes pre-crRNA and tracrRNA of type II CRISPR loci if present in the organism. This is Ribonuclease 3 from Mycoplasmoides pneumoniae (strain ATCC 15531 / DSM 23978 / CIP 103766 / NBRC 14401 / NCTC 10119 / FH) (Mycoplasma pneumoniae).